The primary structure comprises 61 residues: Large ribosomal subunit protein uL30 (61 aa).

Belongs to the universal ribosomal protein uL30 family. Part of the 50S ribosomal subunit.

This chain is Large ribosomal subunit protein uL30, found in Exiguobacterium sp. (strain ATCC BAA-1283 / AT1b).